Consider the following 253-residue polypeptide: 3-isopropylmalate dehydratase small subunit 3 (253 aa).

The N-terminal 56 residues, 1-56 (MATSQQFLNPTLFKSLASSNKNSCTLCPSPFLQLKSASTIFNYKPLTSSSATIITR), are a transit peptide targeting the chloroplast.

Belongs to the LeuD family. In terms of assembly, heterodimer of the large LEUC/IIL1 subunit and the small LEUD (SSU1, SSU2 or SSU3) subunits. In terms of tissue distribution, expressed in vascular bundles of roots, cotyledons and rosette leaves. Expressed in stem vascular bundles which branche off into lateral inflorescences. Expressed in connective tissues in anthers. In hypocotyls, expressed in parenchyma cells surrounding the vasculature. In rosette leaves, expressed in phloem cells and cells close to the xylem along the vascular bundles. In roots of adult plants, expressed in cells closely associated with the stele. In flowering stalks, expressed in parenchyma cells associated with the phloem or the xylem.

It is found in the plastid. Its subcellular location is the chloroplast stroma. The catalysed reaction is (2R,3S)-3-isopropylmalate = (2S)-2-isopropylmalate. The enzyme catalyses a 2-(omega-methylsulfanyl)alkylmalate = a 2-(omega-methylsulfanyl)alkylmaleate + H2O. It catalyses the reaction 2-(3-methylsulfanyl)propylmalate = 2-(2-methylsulfanyl)propylmaleate + H2O. It carries out the reaction a 3-(omega-methylsulfanyl)alkylmalate = a 2-(omega-methylsulfanyl)alkylmaleate + H2O. The catalysed reaction is 2-(2-methylsulfanyl)ethylmalate = 2-(2-methylsulfanyl)ethylmaleate + H2O. The enzyme catalyses 3-(2-methylsulfanyl)ethylmalate = 2-(2-methylsulfanyl)ethylmaleate + H2O. It catalyses the reaction 3-(3-methylsulfanyl)propylmalate = 2-(2-methylsulfanyl)propylmaleate + H2O. It functions in the pathway amino-acid biosynthesis; L-leucine biosynthesis; L-leucine from 3-methyl-2-oxobutanoate: step 2/4. Catalyzes the isomerization between 2-isopropylmalate and 3-isopropylmalate, via the formation of 2-isopropylmaleate. Functions redundantly with LEUD1 in the methionine chain elongation pathway of aliphatic glucosinolate formation. This Arabidopsis thaliana (Mouse-ear cress) protein is 3-isopropylmalate dehydratase small subunit 3.